The chain runs to 231 residues: Staphylococcal superantigen-like 7 (231 aa).

Positions 1–30 are cleaved as a signal peptide; that stretch reads MKLKTLAKATLALGLLTTGVITSEGQAVQA.

It belongs to the staphylococcal/streptococcal toxin family. In terms of assembly, interacts with host IgA and complement C5; these interactions inhibits complement activation.

Its subcellular location is the secreted. In terms of biological role, plays a role in the inhibition of host complement-mediated lysis and serum bactericidal activity by interacting with complement component C5. Affects all three pathways of complement activation and inhibits the cleavage of C5 by preventing its binding to C5 convertases. In turn, prevents C5a-mediated neutrophil migration. This Staphylococcus aureus (strain NCTC 8325 / PS 47) protein is Staphylococcal superantigen-like 7.